Here is a 134-residue protein sequence, read N- to C-terminus: Larval cuticle protein A3A (134 aa).

Repeat unit 1 spans residues 23 to 26 (AAPV). The interval 38-80 (DPHPQYSYGYDIQDGLTGDSKNQQETRDGDVVQGSYSLVDPDG) is disordered. One can recognise a Chitin-binding type R&amp;R domain in the interval 40–106 (HPQYSYGYDI…AVVHREPLVA (67 aa)). Copy 2 of the repeat occupies 111–114 (AAPA).

Functionally, component of the cuticle of the larva of Tenebrio molitor. This chain is Larval cuticle protein A3A, found in Tenebrio molitor (Yellow mealworm beetle).